A 239-amino-acid chain; its full sequence is Purine nucleoside phosphorylase DeoD-type (239 aa).

Position 5 (H5) interacts with a purine D-ribonucleoside. Residues G21, R25, R44, and 88-91 (RVGS) contribute to the phosphate site. Residues 180–182 (EME) and 204–205 (SD) contribute to the a purine D-ribonucleoside site. The active-site Proton donor is the D205.

The protein belongs to the PNP/UDP phosphorylase family. In terms of assembly, homohexamer; trimer of homodimers.

It carries out the reaction a purine D-ribonucleoside + phosphate = a purine nucleobase + alpha-D-ribose 1-phosphate. The catalysed reaction is a purine 2'-deoxy-D-ribonucleoside + phosphate = a purine nucleobase + 2-deoxy-alpha-D-ribose 1-phosphate. In terms of biological role, catalyzes the reversible phosphorolytic breakdown of the N-glycosidic bond in the beta-(deoxy)ribonucleoside molecules, with the formation of the corresponding free purine bases and pentose-1-phosphate. This chain is Purine nucleoside phosphorylase DeoD-type, found in Cronobacter sakazakii (strain ATCC BAA-894) (Enterobacter sakazakii).